Consider the following 255-residue polypeptide: ATP synthase subunit a (255 aa).

Residues methionine 1–isoleucine 7 constitute a propeptide, removed in mature form. Transmembrane regions (helical) follow at residues phenylalanine 35 to tyrosine 55, tyrosine 91 to isoleucine 111, histidine 120 to phenylalanine 140, phenylalanine 147 to isoleucine 167, valine 177 to leucine 197, and glycine 208 to leucine 228.

This sequence belongs to the ATPase A chain family. F-type ATPases have 2 components, CF(1) - the catalytic core - and CF(0) - the membrane proton channel. CF(1) has five subunits: alpha(3), beta(3), gamma(1), delta(1), epsilon(1). CF(0) has three main subunits: a, b and c.

The protein localises to the mitochondrion inner membrane. Its function is as follows. Mitochondrial membrane ATP synthase (F(1)F(0) ATP synthase or Complex V) produces ATP from ADP in the presence of a proton gradient across the membrane which is generated by electron transport complexes of the respiratory chain. F-type ATPases consist of two structural domains, F(1) - containing the extramembraneous catalytic core and F(0) - containing the membrane proton channel, linked together by a central stalk and a peripheral stalk. During catalysis, ATP synthesis in the catalytic domain of F(1) is coupled via a rotary mechanism of the central stalk subunits to proton translocation. Key component of the proton channel; it may play a direct role in the translocation of protons across the membrane. The polypeptide is ATP synthase subunit a (ATP6) (Trichophyton rubrum (Athlete's foot fungus)).